A 253-amino-acid polypeptide reads, in one-letter code: MAMMMRKAAAVPASSRRSVAVNSVSGKRTVSGKAGAPVPEDVLAYAKTLPGVTAPFDNVFDPAGFLATASVKDVRRWRESEITHGRVAMLAALGFIVGEQLQDFPLFFNFDGRVSGPAIYHFQQIGQGFWEPLLIAIGVAESYRVAVGWATPTGTGFNSLKDDYEPGDLGFDPLGLKPTDPEELKTLQTKELNNGRLAMIAIAAFVAQELVEQTEIFEHLVLRFEKEVILELEDVERDLGLPLTPLPDNLKAI.

A chloroplast-targeting transit peptide spans 1 to 39 (MAMMMRKAAAVPASSRRSVAVNSVSGKRTVSGKAGAPVP). Tyrosine 45 provides a ligand contact to chlorophyll b. Residues phenylalanine 60, glutamate 81, and histidine 84 each contribute to the chlorophyll a site. Chlorophyll b is bound at residue arginine 86. A helical transmembrane segment spans residues 87–107 (VAMLAALGFIVGEQLQDFPLF). Glutamine 124 provides a ligand contact to chlorophyll a. The helical transmembrane segment at 131–151 (EPLLIAIGVAESYRVAVGWAT) threads the bilayer. Residues glutamate 141 and arginine 144 each contribute to the chlorophyll b site. Residues lysine 190, glutamate 191, asparagine 194, arginine 196, and glutamine 208 each coordinate chlorophyll a. A helical transmembrane segment spans residues 197–217 (LAMIAIAAFVAQELVEQTEIF).

It belongs to the light-harvesting chlorophyll a/b-binding (LHC) protein family.

The protein localises to the plastid. It is found in the chloroplast thylakoid membrane. In terms of biological role, required for non-photochemical quenching (NPQ), a mechanism that converts and dissipates the harmful excess absorbed light energy into heat and protect the photosynthetic apparatus from photo-oxidative damage. Is able to sense luminal acidification of the thylakoid membranes, which occurs along with elevated electron flow caused by excess light, and to induce a large, fast, and reversible pH-dependent quenching in LHCII-containing membranes. Mediates excitation energy transfer from light-harvesting complex II (LHCII) to photosystem I (PSI), rather than photosystem II (PSII), at low pH, which mimics the acidified lumen of the thylakoid membranes in high light-exposed chloroplasts. Activates PSI-dependent fluorescence quenching in addition to dissipating excitation energy in LHCII to avoid photooxidative stress under excess light. This chain is Light-harvesting complex stress-related protein 1, chloroplastic, found in Chlamydomonas reinhardtii (Chlamydomonas smithii).